The sequence spans 405 residues: Nodal homolog 2-A (405 aa).

A signal peptide spans 1–18 (MASLGVILFFVIASLIHG). Positions 19–282 (KPIHSERKAA…RVTDTRRPRR (264 aa)) are excised as a propeptide. 3 N-linked (GlcNAc...) asparagine glycosylation sites follow: asparagine 71, asparagine 172, and asparagine 343. Cystine bridges form between cysteine 305-cysteine 371, cysteine 334-cysteine 402, and cysteine 338-cysteine 404.

It belongs to the TGF-beta family. Homodimer; disulfide-linked. Forms heterodimers with the TGF-beta family member derriere. Interacts with tsku; enhances nodal2 activity. In terms of tissue distribution, first localized to the vegetal region of the blastula. Just prior to gastrulation (stage 10), this expression disappears and instead becomes localized to the dorsal marginal zone, with enrichment in the organizer.

Its subcellular location is the secreted. Functionally, cooperation and regulatory loops of multiple nodals are essential for mesendoderm patterning in early embryos. Essential for mesoderm formation and axial patterning during embryonic development. Activates the activin-like signaling pathway to induce dorsal and ventral mesoderm in animal cap ectoderm. In addition, also dorsalizes ventral marginal zone (VMZ) tissues during gastrulation. Induces muscle actin. Appears to act as both a short-range and long-range morphogen. The unprocessed protein inhibits bmp- and wnt-signaling. The chain is Nodal homolog 2-A (nodal2-a) from Xenopus laevis (African clawed frog).